Consider the following 325-residue polypeptide: Phenylalanine--tRNA ligase alpha subunit (325 aa).

Mg(2+) is bound at residue glutamate 251.

Belongs to the class-II aminoacyl-tRNA synthetase family. Phe-tRNA synthetase alpha subunit type 1 subfamily. Tetramer of two alpha and two beta subunits. It depends on Mg(2+) as a cofactor.

The protein localises to the cytoplasm. It carries out the reaction tRNA(Phe) + L-phenylalanine + ATP = L-phenylalanyl-tRNA(Phe) + AMP + diphosphate + H(+). The protein is Phenylalanine--tRNA ligase alpha subunit of Thermotoga neapolitana (strain ATCC 49049 / DSM 4359 / NBRC 107923 / NS-E).